Consider the following 463-residue polypeptide: 23S rRNA (uracil(1939)-C(5))-methyltransferase RlmD (463 aa).

Residues 6–76 (KSRKPQQPEY…KRLEEAEMVE (71 aa)) enclose the TRAM domain. Residues cysteine 90, cysteine 96, cysteine 99, and cysteine 178 each coordinate [4Fe-4S] cluster. Positions 288, 317, 322, 341, 368, and 389 each coordinate S-adenosyl-L-methionine. Cysteine 415 serves as the catalytic Nucleophile.

This sequence belongs to the class I-like SAM-binding methyltransferase superfamily. RNA M5U methyltransferase family. RlmD subfamily.

The enzyme catalyses uridine(1939) in 23S rRNA + S-adenosyl-L-methionine = 5-methyluridine(1939) in 23S rRNA + S-adenosyl-L-homocysteine + H(+). In terms of biological role, catalyzes the formation of 5-methyl-uridine at position 1939 (m5U1939) in 23S rRNA. In Acinetobacter baumannii (strain AYE), this protein is 23S rRNA (uracil(1939)-C(5))-methyltransferase RlmD.